Reading from the N-terminus, the 467-residue chain is Glutamate--tRNA ligase (467 aa).

Residues 9–19 (PSPTGYLHIGG) carry the 'HIGH' region motif. The 'KMSKS' region motif lies at 237 to 241 (KLSKR). Position 240 (lysine 240) interacts with ATP.

This sequence belongs to the class-I aminoacyl-tRNA synthetase family. Glutamate--tRNA ligase type 1 subfamily. As to quaternary structure, monomer.

It is found in the cytoplasm. The enzyme catalyses tRNA(Glu) + L-glutamate + ATP = L-glutamyl-tRNA(Glu) + AMP + diphosphate. Catalyzes the attachment of glutamate to tRNA(Glu) in a two-step reaction: glutamate is first activated by ATP to form Glu-AMP and then transferred to the acceptor end of tRNA(Glu). The chain is Glutamate--tRNA ligase from Xanthomonas campestris pv. campestris (strain 8004).